The following is a 388-amino-acid chain: Lipid-A-disaccharide synthase (388 aa).

This sequence belongs to the LpxB family.

The enzyme catalyses a lipid X + a UDP-2-N,3-O-bis[(3R)-3-hydroxyacyl]-alpha-D-glucosamine = a lipid A disaccharide + UDP + H(+). It participates in bacterial outer membrane biogenesis; LPS lipid A biosynthesis. Functionally, condensation of UDP-2,3-diacylglucosamine and 2,3-diacylglucosamine-1-phosphate to form lipid A disaccharide, a precursor of lipid A, a phosphorylated glycolipid that anchors the lipopolysaccharide to the outer membrane of the cell. This chain is Lipid-A-disaccharide synthase, found in Burkholderia pseudomallei (strain K96243).